Reading from the N-terminus, the 303-residue chain is Glycine betaine/carnitine/choline-binding protein OpuCC (303 aa).

The N-terminal stretch at 1-20 is a signal peptide; the sequence is MTKIKWLGAFALVFVMLLGG. C21 carries the N-palmitoyl cysteine lipid modification. A lipid anchor (S-diacylglycerol cysteine) is attached at C21.

Belongs to the OsmX family. In terms of assembly, the complex is composed of two ATP-binding proteins (OpuCA), two transmembrane proteins (OpuCB and OpuCD) and a solute-binding protein (OpuCC).

It is found in the cell membrane. Functionally, member of a high affinity multicomponent binding-protein-dependent transport system for glycine betaine, carnitine, and choline. The protein is Glycine betaine/carnitine/choline-binding protein OpuCC (opuCC) of Bacillus subtilis (strain 168).